Reading from the N-terminus, the 540-residue chain is Glucose-6-phosphate isomerase (540 aa).

Glu350 functions as the Proton donor in the catalytic mechanism. Catalysis depends on residues His381 and Lys503.

This sequence belongs to the GPI family.

Its subcellular location is the cytoplasm. It catalyses the reaction alpha-D-glucose 6-phosphate = beta-D-fructose 6-phosphate. It participates in carbohydrate biosynthesis; gluconeogenesis. The protein operates within carbohydrate degradation; glycolysis; D-glyceraldehyde 3-phosphate and glycerone phosphate from D-glucose: step 2/4. Catalyzes the reversible isomerization of glucose-6-phosphate to fructose-6-phosphate. The sequence is that of Glucose-6-phosphate isomerase from Burkholderia pseudomallei (strain 1106a).